Reading from the N-terminus, the 603-residue chain is Shugoshin (603 aa).

Residues histidine 11–leucine 74 are a coiled coil. Disordered regions lie at residues glutamate 112 to threonine 164 and asparagine 201 to arginine 227. Composition is skewed to low complexity over residues serine 146–serine 157 and asparagine 201–leucine 214. Positions proline 218–arginine 227 are enriched in basic residues. Residues lysine 304–glutamate 325 are a coiled coil. A disordered region spans residues proline 331–arginine 399. Basic residues predominate over residues lysine 362–lysine 376. The stretch at asparagine 431–lysine 451 forms a coiled coil. Residues lysine 455–phenylalanine 467 are compositionally biased toward basic and acidic residues. 2 disordered regions span residues lysine 455–phenylalanine 519 and histidine 583–alanine 603. Residues arginine 483–asparagine 512 show a composition bias toward low complexity. The segment covering histidine 583–threonine 593 has biased composition (polar residues). A compositionally biased stretch (basic residues) spans tyrosine 594–alanine 603.

Belongs to the shugoshin family.

The protein localises to the nucleus. Its subcellular location is the chromosome. It is found in the centromere. Functionally, plays a central role in chromosome cohesion during cell division by preventing premature dissociation of cohesin complex from centromeres after prophase, when most of cohesin complex dissociates from chromosomes arms. This is Shugoshin (SGO1) from Candida glabrata (strain ATCC 2001 / BCRC 20586 / JCM 3761 / NBRC 0622 / NRRL Y-65 / CBS 138) (Yeast).